The chain runs to 305 residues: J domain-containing protein 1 (305 aa).

One can recognise a J domain in the interval 91 to 163 (TPYEVLGLVK…SRRRMYDMYA (73 aa)). A helical membrane pass occupies residues 212–232 (WGMVVWALCMLAGFQVMAFLI).

This sequence belongs to the DnaJ family.

Its subcellular location is the mitochondrion membrane. In terms of biological role, probable chaperone. The protein is J domain-containing protein 1 (JID1) of Eremothecium gossypii (strain ATCC 10895 / CBS 109.51 / FGSC 9923 / NRRL Y-1056) (Yeast).